The chain runs to 169 residues: MICLVLTIFANLFPSAYSGVNERTFLAVKPDGVQRRLVGEIVRRFERKGFKLVALKLVQASEELLREHYVELREKPFYSRLVKYMSSGPVVAMVWQGLDVVHASRALIGATDPGDAMPGTIRGDFCMEVGKNVIHGSDSVESAHREIALWFREAELLCWEDSAGHWLYE.

The ADP site is built by K29, R105, T111, R122, V129, and N132. The active-site Pros-phosphohistidine intermediate is the H135.

Belongs to the NDK family. In terms of assembly, homohexamer. Interacts (via its N-terminal region) with KAT5; this interaction enables recruitment of NME3 at DNA damage sites where it plays a role in the repair of DNA. Found in association with several ciliary nephronophthisis proteins, including NEK8, CEP164, ANKS6. It depends on Mg(2+) as a cofactor.

The protein resides in the mitochondrion outer membrane. Its subcellular location is the cytoplasm. It is found in the cytoskeleton. It localises to the cilium basal body. It catalyses the reaction a 2'-deoxyribonucleoside 5'-diphosphate + ATP = a 2'-deoxyribonucleoside 5'-triphosphate + ADP. The enzyme catalyses a ribonucleoside 5'-diphosphate + ATP = a ribonucleoside 5'-triphosphate + ADP. Catalyzes the phosphorylation of ribonucleosides and deoxyribonucleoside diphosphates, other than ATP, into the corresponding triphosphates with ATP as the major phosphate donor. The ATP gamma phosphate is transferred to the nucleoside diphosphate beta phosphate via a ping-pong mechanism, using a phosphorylated active-site intermediate. Through the catalyzed exchange of gamma-phosphate between di- and triphosphonucleosides participates in regulation of intracellular nucleotide homeostasis. Inhibits granulocyte differentiation. May be required for ciliary function during renal development. Functionally, independently of its kinase activity, facilitates mitochondrial tethering prior to membrane fusion through its direct membrane-binding and hexamerization. Implicated in repair of both single- and double-stranded breaks in DNA through its association with the ribonucleotide reductase complex (RNR complex) via its interaction with the histone acetyltransferase KAT5, this interaction enables recruitment of NME3 at DNA damage sites where it plays a role in the repair of DNA, independently of its kinase activity. The sequence is that of Nucleoside diphosphate kinase 3 (Nme3) from Mus musculus (Mouse).